Here is a 191-residue protein sequence, read N- to C-terminus: Signal peptidase IB (191 aa).

Residues 1-7 are Cytoplasmic-facing; it reads MKKELLE. The chain crosses the membrane as a helical span at residues 8 to 28; that stretch reads WIISIAVAFVILFIVGKFIVT. Residues 29-191 are Extracellular-facing; sequence PYTIKGESMD…YNFNPENTKN (163 aa). Active-site residues include serine 36 and lysine 77.

It belongs to the peptidase S26 family.

The protein localises to the cell membrane. It catalyses the reaction Cleavage of hydrophobic, N-terminal signal or leader sequences from secreted and periplasmic proteins.. In terms of biological role, essential for cell viability. In Staphylococcus aureus (strain MRSA252), this protein is Signal peptidase IB (spsB).